A 232-amino-acid polypeptide reads, in one-letter code: Histone H1.X (232 aa).

An H15 domain is found at 36-112; sequence HHPSYMDMIK…GATGSFRMGK (77 aa). Positions 142–232 are disordered; that stretch reads ISKAEKTKPS…LRTGTRKSYC (91 aa). Residues 159–197 are compositionally biased toward basic residues; that stretch reads KKGKPISTMKKRGVMSKKRSSKNKMAPKAKSHGLKKKGP.

The protein belongs to the histone H1/H5 family.

Its subcellular location is the nucleus. It is found in the chromosome. The protein is Histone H1.X (hil-1) of Caenorhabditis elegans.